Here is a 147-residue protein sequence, read N- to C-terminus: Large ribosomal subunit protein uL13 (147 aa).

It belongs to the universal ribosomal protein uL13 family. Part of the 50S ribosomal subunit.

Functionally, this protein is one of the early assembly proteins of the 50S ribosomal subunit, although it is not seen to bind rRNA by itself. It is important during the early stages of 50S assembly. The protein is Large ribosomal subunit protein uL13 of Renibacterium salmoninarum (strain ATCC 33209 / DSM 20767 / JCM 11484 / NBRC 15589 / NCIMB 2235).